The following is a 105-amino-acid chain: Putative toxin MazF8 (105 aa).

As to quaternary structure, forms a complex with cognate antitoxin MazE8.

Its function is as follows. Putative toxic component of a type II toxin-antitoxin (TA) system. Acts as an endoribonuclease. Neutralized by coexpression with cognate antitoxin MazE8. The protein is Putative toxin MazF8 (mazF8) of Mycobacterium tuberculosis (strain CDC 1551 / Oshkosh).